The primary structure comprises 513 residues: 2-isopropylmalate synthase (513 aa).

The Pyruvate carboxyltransferase domain occupies 5–268 (LIIFDTTLRD…DLRVDTSQIV (264 aa)). Residues aspartate 14, histidine 202, histidine 204, and asparagine 239 each contribute to the Mn(2+) site. The regulatory domain stretch occupies residues 394 to 513 (RLLALSQHSE…SKAERVAAQG (120 aa)).

Belongs to the alpha-IPM synthase/homocitrate synthase family. LeuA type 1 subfamily. In terms of assembly, homodimer. Mn(2+) serves as cofactor.

The protein localises to the cytoplasm. The catalysed reaction is 3-methyl-2-oxobutanoate + acetyl-CoA + H2O = (2S)-2-isopropylmalate + CoA + H(+). It participates in amino-acid biosynthesis; L-leucine biosynthesis; L-leucine from 3-methyl-2-oxobutanoate: step 1/4. Catalyzes the condensation of the acetyl group of acetyl-CoA with 3-methyl-2-oxobutanoate (2-ketoisovalerate) to form 3-carboxy-3-hydroxy-4-methylpentanoate (2-isopropylmalate). The sequence is that of 2-isopropylmalate synthase from Leptothrix cholodnii (strain ATCC 51168 / LMG 8142 / SP-6) (Leptothrix discophora (strain SP-6)).